Reading from the N-terminus, the 195-residue chain is Molybdopterin synthase catalytic subunit (195 aa).

The interval 1 to 37 (MSARPEPQPGSERNATEPLPSHLDPTTYPRTLTTTHG) is disordered. The span at 25-37 (PTTYPRTLTTTHG) shows a compositional bias: low complexity. Substrate contacts are provided by residues 141-142 (HR), Lys-157, and 164-166 (KRE).

This sequence belongs to the MoaE family. MOCS2B subfamily. Heterotetramer; composed of 2 small (MOCS2A) and 2 large (MOCS2B) subunits.

Its subcellular location is the cytoplasm. The enzyme catalyses 2 [molybdopterin-synthase sulfur-carrier protein]-C-terminal-Gly-aminoethanethioate + cyclic pyranopterin phosphate + H2O = molybdopterin + 2 [molybdopterin-synthase sulfur-carrier protein]-C-terminal Gly-Gly + 2 H(+). It participates in cofactor biosynthesis; molybdopterin biosynthesis. Functionally, catalytic subunit of the molybdopterin synthase complex, a complex that catalyzes the conversion of precursor Z into molybdopterin. Acts by mediating the incorporation of 2 sulfur atoms from thiocarboxylated MOCS2A into precursor Z to generate a dithiolene group. In Emericella nidulans (strain FGSC A4 / ATCC 38163 / CBS 112.46 / NRRL 194 / M139) (Aspergillus nidulans), this protein is Molybdopterin synthase catalytic subunit.